We begin with the raw amino-acid sequence, 575 residues long: Eukaryotic translation initiation factor 3 subunit D (575 aa).

Disordered regions lie at residues Pro-36–Arg-66 and Ser-103–Val-177. Positions Lys-39–Gly-59 are enriched in basic and acidic residues. Over residues Phe-109–Gly-144 the composition is skewed to gly residues. Positions Gly-163–Asp-174 are enriched in basic and acidic residues. The RNA gate stretch occupies residues Asn-302 to Pro-316.

It belongs to the eIF-3 subunit D family. Component of the eukaryotic translation initiation factor 3 (eIF-3) complex.

It localises to the cytoplasm. MRNA cap-binding component of the eukaryotic translation initiation factor 3 (eIF-3) complex, which is involved in protein synthesis of a specialized repertoire of mRNAs and, together with other initiation factors, stimulates binding of mRNA and methionyl-tRNAi to the 40S ribosome. The eIF-3 complex specifically targets and initiates translation of a subset of mRNAs involved in cell proliferation. In the eIF-3 complex, eif3d specifically recognizes and binds the 7-methylguanosine cap of a subset of mRNAs. This Phaeosphaeria nodorum (strain SN15 / ATCC MYA-4574 / FGSC 10173) (Glume blotch fungus) protein is Eukaryotic translation initiation factor 3 subunit D.